The following is a 223-amino-acid chain: Noggin (223 aa).

The first 26 residues, 1–26 (MDHSQCLVTIYAAAVLLGLRLQQGSC), serve as a signal peptide directing secretion. N-linked (GlcNAc...) asparagine glycosylation occurs at Asn61. Intrachain disulfides connect Cys146/Cys183, Cys169/Cys219, Cys175/Cys221, and Cys198/Cys206.

It belongs to the noggin family. Homodimer.

The protein resides in the secreted. In terms of biological role, inhibitor of bone morphogenetic proteins (BMP) signaling. Controls somitogenesis by sequestering the BMP-4 activity which in turn differentiates distinct subtypes of the mesoderm along the mediolateral axis. The chain is Noggin (NOG) from Gallus gallus (Chicken).